The primary structure comprises 1014 residues: Pre-mRNA-processing ATP-dependent RNA helicase prp11 (1014 aa).

Residues 1–11 show a composition bias toward basic residues; that stretch reads MSRRTRSRSPP. The disordered stretch occupies residues 1-149; the sequence is MSRRTRSRSP…SRFDRTERVG (149 aa). 2 stretches are compositionally biased toward basic and acidic residues: residues 15-87 and 106-121; these read YNRE…EYAR and RHAE…KSDE. A Q motif motif is present at residues 418-446; that stretch reads TSWSQCGLSAQTISVINSLGYEKPTSIQA. In terms of domain architecture, Helicase ATP-binding spans 449–627; the sequence is IPAITSGRDV…RKVLKKPVEI (179 aa). Position 462-469 (462-469) interacts with ATP; it reads AKTGSGKT. The DEAD box motif lies at 575-578; that stretch reads DEAD. Residues 638-802 form the Helicase C-terminal domain; that stretch reads EVEQIVEVRP…PVPKELQTLA (165 aa). The segment at 815–875 is disordered; it reads KAAGGGFGGK…PEKSTGDPTL (61 aa). Basic and acidic residues-rich tracts occupy residues 827 to 838 and 855 to 875; these read SRLDETRNAERK and AEAK…DPTL.

It belongs to the DEAD box helicase family. DDX46/PRP5 subfamily.

It localises to the nucleus. It carries out the reaction ATP + H2O = ADP + phosphate + H(+). Functionally, ATP-dependent RNA helicase involved in pre-spliceosome/complex A assembly and mRNA splicing. Bridges U1 and U2 snRNPs during pre-spliceosome assembly and enables stable U2 snRNP association with intron RNA. Through its helicase activity probably catalyzes an ATP-dependent conformational change of U2 snRNP. The protein is Pre-mRNA-processing ATP-dependent RNA helicase prp11 (prp11) of Schizosaccharomyces pombe (strain 972 / ATCC 24843) (Fission yeast).